The following is a 213-amino-acid chain: Ras-related protein Rab-19 (213 aa).

GTP is bound by residues Ser-24, Val-26, Gly-27, Lys-28, Thr-29, Cys-30, Asp-42, and Thr-47. A Mg(2+)-binding site is contributed by Thr-29. The Switch 1 motif lies at 37–52; sequence SGIFMDNQQNTIGVDF. Residues Thr-47 and Asp-70 each contribute to the Mg(2+) site. The Switch 2 signature appears at 72–87; it reads AGQERFRTITQSYYRS. The GTP site is built by Gly-73, Asn-128, Lys-129, Asp-131, Ser-159, Ala-160, and Lys-161. S-geranylgeranyl cysteine attachment occurs at residues Cys-211 and Cys-213. Cys-213 is modified (cysteine methyl ester).

This sequence belongs to the small GTPase superfamily. Rab family. Mg(2+) serves as cofactor.

The protein resides in the cell membrane. It carries out the reaction GTP + H2O = GDP + phosphate + H(+). With respect to regulation, regulated by guanine nucleotide exchange factors (GEFs) which promote the exchange of bound GDP for free GTP. Regulated by GTPase activating proteins (GAPs) which increase the GTP hydrolysis activity. Inhibited by GDP dissociation inhibitors (GDIs). Its function is as follows. The small GTPases Rab are key regulators of intracellular membrane trafficking, from the formation of transport vesicles to their fusion with membranes. Rabs cycle between an inactive GDP-bound form and an active GTP-bound form that is able to recruit to membranes different set of downstream effectors directly responsible for vesicle formation, movement, tethering and fusion. The polypeptide is Ras-related protein Rab-19 (rab19) (Xenopus laevis (African clawed frog)).